A 576-amino-acid polypeptide reads, in one-letter code: DNA mismatch repair protein MutL (576 aa).

The protein belongs to the DNA mismatch repair MutL/HexB family.

Functionally, this protein is involved in the repair of mismatches in DNA. It is required for dam-dependent methyl-directed DNA mismatch repair. May act as a 'molecular matchmaker', a protein that promotes the formation of a stable complex between two or more DNA-binding proteins in an ATP-dependent manner without itself being part of a final effector complex. This Chlamydia trachomatis serovar L2 (strain ATCC VR-902B / DSM 19102 / 434/Bu) protein is DNA mismatch repair protein MutL.